We begin with the raw amino-acid sequence, 616 residues long: MMTDNRNTILAVILSGLVLIAWQYFYNVPAMEKQRAQQQAQAELQKTTPQPTASATPGATPQSGGAAQPSTPAAGQQAQPVVARDAAIAASPRVKIDTPRIAGSISLKGGRIDDVALVQYRETVDPKSPPIVLYSPSGTAEPYYAEFGWVPATGVTAKLPDAQTLWQQDGSGSLTPTTPAVLKWDNGEGLTFRRTISVDDHYLFTIKDEVSNVGNAPVTLYPFALISRHGTPQVSGYYILHEGLIGYLDGLQEYAYKKIDEAKSVNFKATNGWLGMTDKYWASALLPDTSAQLQARFSSNPVGNVHTYQTDYLLDPVTVAIGGSATANARLFAGAKEAGVVGINFPLAGHGGYNKELNLNHFDLLIDWGWFYFITKPMFLGLDFFYRFFGNFGISILLVTVIVKLLFFPLANKSYASMAKMKSIQPQLQALKERYPDDKVKQQQEMMEIYRKEKINPVAGCLPVVIQIPVFFSLYKVLFVTIEMRQAPFYGWIKDLSAPDPTNLFNLFGLIPLDPTTIPVFGHYLALGIWPIIMGITMWFQMKLNPTPPDPTQQMIFNWMPLIFTFMLAGFPAGLVIYWAWNNTLSVLQQSFIMRRNGVKVELFDNLKATFARKAT.

Residues 9-29 (ILAVILSGLVLIAWQYFYNVP) traverse the membrane as a helical segment. Residues 37–80 (QQQAQAELQKTTPQPTASATPGATPQSGGAAQPSTPAAGQQAQP) are disordered. The span at 44–71 (LQKTTPQPTASATPGATPQSGGAAQPST) shows a compositional bias: polar residues. A run of 4 helical transmembrane segments spans residues 388-408 (FFGNFGISILLVTVIVKLLFF), 462-482 (LPVVIQIPVFFSLYKVLFVTI), 520-540 (VFGHYLALGIWPIIMGITMWF), and 559-579 (WMPLIFTFMLAGFPAGLVIYW).

Belongs to the OXA1/ALB3/YidC family. Type 1 subfamily. In terms of assembly, interacts with the Sec translocase complex via SecD. Specifically interacts with transmembrane segments of nascent integral membrane proteins during membrane integration.

It localises to the cell inner membrane. Its function is as follows. Required for the insertion and/or proper folding and/or complex formation of integral membrane proteins into the membrane. Involved in integration of membrane proteins that insert both dependently and independently of the Sec translocase complex, as well as at least some lipoproteins. Aids folding of multispanning membrane proteins. This Bradyrhizobium diazoefficiens (strain JCM 10833 / BCRC 13528 / IAM 13628 / NBRC 14792 / USDA 110) protein is Membrane protein insertase YidC.